The following is a 326-amino-acid chain: Vitamin B12 import system permease protein BtuC (326 aa).

The next 9 membrane-spanning stretches (helical) occupy residues 15-35 (WLLSLSLLVLLATLLSLCAGE), 61-81 (LAVLLVGAALALSGAVMQALF), 88-108 (PGLLGVSNGAGVGLIAAVLLG), 112-132 (LPGWALGLCAIAGALIITLIL), 146-166 (LLAGVALGIICSALMTWAIYF), 184-204 (GGVDWQQSWLMIALIPVLIWI), 240-260 (GWMVGVSVAMAGAIGFIGLVI), 274-294 (VLLPGCALAGAIALLLADVVA), and 302-322 (ELPIGVVTATLGAPVFIWLLL).

This sequence belongs to the binding-protein-dependent transport system permease family. FecCD subfamily. As to quaternary structure, the complex is composed of two ATP-binding proteins (BtuD), two transmembrane proteins (BtuC) and a solute-binding protein (BtuF).

The protein resides in the cell inner membrane. In terms of biological role, part of the ABC transporter complex BtuCDF involved in vitamin B12 import. Involved in the translocation of the substrate across the membrane. In Salmonella choleraesuis (strain SC-B67), this protein is Vitamin B12 import system permease protein BtuC.